Here is a 341-residue protein sequence, read N- to C-terminus: GTP-binding protein REM 2 (341 aa).

Positions 1-13 (MHTDLDTDMDADT) are enriched in acidic residues. Disordered regions lie at residues 1–72 (MHTD…SMPV) and 84–106 (VDEL…GSGE). Polar residues predominate over residues 18 to 32 (LCSSSSRQASPSGTP). Phosphoserine is present on Ser-27. The segment covering 43–54 (QKPEKLLAELDR) has biased composition (basic and acidic residues). Low complexity predominate over residues 94-105 (SSSGSSDSLGSG). GTP is bound by residues 122–129 (GESGVGKS), 230–233 (NKSD), and 261–262 (AA). A disordered region spans residues 282–309 (RGRGHAGGQRPEPSSPDGPAPPTRRESL). Positions 294–303 (PSSPDGPAPP) are enriched in pro residues. Position 296 is a phosphoserine (Ser-296).

The protein belongs to the small GTPase superfamily. RGK family. In terms of tissue distribution, expressed in brain and kidney.

The protein localises to the cell membrane. Functionally, binds GTP saturably and exhibits a low intrinsic rate of GTP hydrolysis. The polypeptide is GTP-binding protein REM 2 (Rem2) (Rattus norvegicus (Rat)).